The sequence spans 436 residues: Adenylosuccinate synthetase (436 aa).

Residues 13–19 (GDEGKGK) and 41–43 (GHT) contribute to the GTP site. Residue aspartate 14 is the Proton acceptor of the active site. Positions 14 and 41 each coordinate Mg(2+). Residues 14 to 17 (DEGK), 39 to 42 (NAGH), threonine 130, arginine 144, glutamine 225, threonine 240, and arginine 304 each bind IMP. Histidine 42 functions as the Proton donor in the catalytic mechanism. 300 to 306 (ATTGRSR) is a binding site for substrate. GTP-binding positions include arginine 306, 332-334 (KLD), and 415-417 (STG).

This sequence belongs to the adenylosuccinate synthetase family. Homodimer. Mg(2+) is required as a cofactor.

The protein resides in the cytoplasm. It catalyses the reaction IMP + L-aspartate + GTP = N(6)-(1,2-dicarboxyethyl)-AMP + GDP + phosphate + 2 H(+). It participates in purine metabolism; AMP biosynthesis via de novo pathway; AMP from IMP: step 1/2. Its function is as follows. Plays an important role in the de novo pathway of purine nucleotide biosynthesis. Catalyzes the first committed step in the biosynthesis of AMP from IMP. The chain is Adenylosuccinate synthetase from Hamiltonella defensa subsp. Acyrthosiphon pisum (strain 5AT).